Consider the following 299-residue polypeptide: Protoheme IX farnesyltransferase (299 aa).

The next 9 helical transmembrane spans lie at 26–46, 53–73, 94–114, 121–141, 149–169, 175–195, 217–239, 243–265, and 277–297; these read VNAL…PDGL, FAAT…NCLI, LHSV…LSVL, LTMW…TLLL, IVIG…AVSG, ALLL…SLAL, YTRL…PFAI, GWIY…WRLL, and FRFS…DHYL.

Belongs to the UbiA prenyltransferase family. Protoheme IX farnesyltransferase subfamily.

It is found in the cell inner membrane. The enzyme catalyses heme b + (2E,6E)-farnesyl diphosphate + H2O = Fe(II)-heme o + diphosphate. Its pathway is porphyrin-containing compound metabolism; heme O biosynthesis; heme O from protoheme: step 1/1. Converts heme B (protoheme IX) to heme O by substitution of the vinyl group on carbon 2 of heme B porphyrin ring with a hydroxyethyl farnesyl side group. This Azoarcus sp. (strain BH72) protein is Protoheme IX farnesyltransferase.